Here is a 487-residue protein sequence, read N- to C-terminus: MTHFIKGQWHTGKGHDVASSNPANGEIIWRGQTATAEQVNAAVDAAREAQFDWFILGFDARLKIVEAYRSQLEANKAELAETIAQETGKPQWETATEVAAMIGKIGLSASAYNKRTGTETNDTPAGRAVLRHKPHGVVAVFGPYNFPGHLPNGHIVPALLAGNSVVFKPSELTPKVAELMVTLWEKSGLPAGVLNLVQGEVDTGKALASHPQLDGLFFTGSSRTGHLLHQQYAGHPGKILALEMGGNNPLIIKGVADIKAAVHDILQSAYISSGQRCTCARRLYVEQGEQGDALVAKLVEAVKQIKVGPWNAQPQPFMGSMISEAAAKGMVAAQANLLSLGGVPLVELMHLQAGTGLVSPGLIDVTAVSELPDEEYFGPLLQLVRYSDFDQAIKLANQTRYGLSAGILADSREDYEYFLARIRAGIVNWNKQITGASGAAPFGGVGASGNHRASAFYAADYCAYPVASVEADAVSLPATLSPGLTLS.

The tract at residues 1-23 (MTHFIKGQWHTGKGHDVASSNPA) is disordered. Residue 220–225 (GSSRTG) coordinates NAD(+). Catalysis depends on residues Glu-243 and Cys-277.

This sequence belongs to the aldehyde dehydrogenase family. AstD subfamily.

It catalyses the reaction N-succinyl-L-glutamate 5-semialdehyde + NAD(+) + H2O = N-succinyl-L-glutamate + NADH + 2 H(+). It functions in the pathway amino-acid degradation; L-arginine degradation via AST pathway; L-glutamate and succinate from L-arginine: step 4/5. Functionally, catalyzes the NAD-dependent reduction of succinylglutamate semialdehyde into succinylglutamate. The sequence is that of N-succinylglutamate 5-semialdehyde dehydrogenase from Shewanella oneidensis (strain ATCC 700550 / JCM 31522 / CIP 106686 / LMG 19005 / NCIMB 14063 / MR-1).